The following is a 231-amino-acid chain: Ribonuclease 3 (231 aa).

The region spanning 7-135 (IQAIESKLNF…ILGAVYLDGG (129 aa)) is the RNase III domain. E48 is a binding site for Mg(2+). D52 is an active-site residue. Residues N121 and E124 each coordinate Mg(2+). E124 is a catalytic residue. One can recognise a DRBM domain in the interval 160–229 (NPKNRLQQFT…AKQALSTHDN (70 aa)).

The protein belongs to the ribonuclease III family. Homodimer. It depends on Mg(2+) as a cofactor.

The protein resides in the cytoplasm. It carries out the reaction Endonucleolytic cleavage to 5'-phosphomonoester.. Functionally, digests double-stranded RNA. Involved in the processing of primary rRNA transcript to yield the immediate precursors to the large and small rRNAs (23S and 16S). Processes some mRNAs, and tRNAs when they are encoded in the rRNA operon. Processes pre-crRNA and tracrRNA of type II CRISPR loci if present in the organism. The sequence is that of Ribonuclease 3 from Chlamydia trachomatis serovar A (strain ATCC VR-571B / DSM 19440 / HAR-13).